Reading from the N-terminus, the 117-residue chain is Ribonuclease P protein component (117 aa).

It belongs to the RnpA family. Consists of a catalytic RNA component (M1 or rnpB) and a protein subunit.

The catalysed reaction is Endonucleolytic cleavage of RNA, removing 5'-extranucleotides from tRNA precursor.. In terms of biological role, RNaseP catalyzes the removal of the 5'-leader sequence from pre-tRNA to produce the mature 5'-terminus. It can also cleave other RNA substrates such as 4.5S RNA. The protein component plays an auxiliary but essential role in vivo by binding to the 5'-leader sequence and broadening the substrate specificity of the ribozyme. In Staphylococcus aureus (strain bovine RF122 / ET3-1), this protein is Ribonuclease P protein component.